Here is a 343-residue protein sequence, read N- to C-terminus: Methionine import ATP-binding protein MetN (343 aa).

Positions 2-241 (ITLSHITKQF…PKTPLAQAFI (240 aa)) constitute an ABC transporter domain. 38 to 45 (GASGAGKS) contacts ATP.

The protein belongs to the ABC transporter superfamily. Methionine importer (TC 3.A.1.24) family. As to quaternary structure, the complex is composed of two ATP-binding proteins (MetN), two transmembrane proteins (MetI) and a solute-binding protein (MetQ).

The protein resides in the cell inner membrane. It carries out the reaction L-methionine(out) + ATP + H2O = L-methionine(in) + ADP + phosphate + H(+). The enzyme catalyses D-methionine(out) + ATP + H2O = D-methionine(in) + ADP + phosphate + H(+). Its function is as follows. Part of the ABC transporter complex MetNIQ involved in methionine import. Responsible for energy coupling to the transport system. The chain is Methionine import ATP-binding protein MetN from Sodalis glossinidius (strain morsitans).